Consider the following 430-residue polypeptide: S-adenosylmethionine synthase (430 aa).

His14 is a binding site for ATP. Mg(2+) is bound at residue Asp16. Glu42 provides a ligand contact to K(+). Glu55 and Gln98 together coordinate L-methionine. Residues 98–108 (QSADINRGVER) form a flexible loop region. ATP contacts are provided by residues 164-166 (DAK), 254-255 (KF), Asp263, 269-270 (RK), Ala286, and Lys290. An L-methionine-binding site is contributed by Asp263. Lys294 provides a ligand contact to L-methionine.

This sequence belongs to the AdoMet synthase family. As to quaternary structure, homotetramer; dimer of dimers. The cofactor is Mg(2+). It depends on K(+) as a cofactor.

It localises to the cytoplasm. The enzyme catalyses L-methionine + ATP + H2O = S-adenosyl-L-methionine + phosphate + diphosphate. Its pathway is amino-acid biosynthesis; S-adenosyl-L-methionine biosynthesis; S-adenosyl-L-methionine from L-methionine: step 1/1. Functionally, catalyzes the formation of S-adenosylmethionine (AdoMet) from methionine and ATP. The overall synthetic reaction is composed of two sequential steps, AdoMet formation and the subsequent tripolyphosphate hydrolysis which occurs prior to release of AdoMet from the enzyme. The polypeptide is S-adenosylmethionine synthase (Bacteroides fragilis (strain ATCC 25285 / DSM 2151 / CCUG 4856 / JCM 11019 / LMG 10263 / NCTC 9343 / Onslow / VPI 2553 / EN-2)).